The sequence spans 367 residues: MMETQLYIGIMSGTSMDGADAVLIRMDGGKWLGAEGHAFTPYPDRLRRQLLDLQDTGADELHRSRILSQELSRLYAQTAAELLCSQNLAPSDITALGCHGQTVRHAPEHGYSIQLADLPLLAERTRIFTVGDFRSRDLAAGGQGAPLVPAFHEALFRDNRETRAVLNIGGIANISVLPPDAPAFGFDTGPGNMLMDAWTQAHWQLPYDKNGAKAAQGNILPQLLDRLLAHPYFARPHPKSTGRELFALNWLETYLDGGENRYDVLRTLSRFTAQTVFDAVSHAAADTRQMYICGGGIRNPVLMADLAECFGTRVSLHSTAELNLDPQWVEAAAFAWLAACWINRIPGSPHKATGASKPCILGAGYYY.

13 to 20 (GTSMDGAD) is a binding site for ATP.

Belongs to the anhydro-N-acetylmuramic acid kinase family.

The catalysed reaction is 1,6-anhydro-N-acetyl-beta-muramate + ATP + H2O = N-acetyl-D-muramate 6-phosphate + ADP + H(+). Its pathway is amino-sugar metabolism; 1,6-anhydro-N-acetylmuramate degradation. The protein operates within cell wall biogenesis; peptidoglycan recycling. Catalyzes the specific phosphorylation of 1,6-anhydro-N-acetylmuramic acid (anhMurNAc) with the simultaneous cleavage of the 1,6-anhydro ring, generating MurNAc-6-P. Is required for the utilization of anhMurNAc either imported from the medium or derived from its own cell wall murein, and thus plays a role in cell wall recycling. This chain is Anhydro-N-acetylmuramic acid kinase, found in Neisseria meningitidis serogroup C / serotype 2a (strain ATCC 700532 / DSM 15464 / FAM18).